The primary structure comprises 230 residues: Small ribosomal subunit protein uS7B (230 aa).

Residues 1–22 (MSEEVVESSSQEASQVIPQEQE) form a disordered region. Residues 7-16 (ESSSQEASQV) are compositionally biased toward low complexity.

The protein belongs to the universal ribosomal protein uS7 family.

The sequence is that of Small ribosomal subunit protein uS7B (RpS5b) from Drosophila melanogaster (Fruit fly).